The chain runs to 613 residues: DNA mismatch repair protein MutL (613 aa).

Residues 364–393 (EPAVARQPEAPRYSSGASAPRPTGANYPHA) form a disordered region.

The protein belongs to the DNA mismatch repair MutL/HexB family.

This protein is involved in the repair of mismatches in DNA. It is required for dam-dependent methyl-directed DNA mismatch repair. May act as a 'molecular matchmaker', a protein that promotes the formation of a stable complex between two or more DNA-binding proteins in an ATP-dependent manner without itself being part of a final effector complex. The polypeptide is DNA mismatch repair protein MutL (Enterobacter sp. (strain 638)).